Consider the following 120-residue polypeptide: Large ribosomal subunit protein bL20c (120 aa).

The protein belongs to the bacterial ribosomal protein bL20 family.

The protein resides in the plastid. Functionally, binds directly to 23S ribosomal RNA and is necessary for the in vitro assembly process of the 50S ribosomal subunit. It is not involved in the protein synthesizing functions of that subunit. The protein is Large ribosomal subunit protein bL20c of Cuscuta obtusiflora (Peruvian dodder).